Reading from the N-terminus, the 2242-residue chain is Transcription factor sma-9 (2242 aa).

Positions 120-383 (HQLAQQQAQQ…QQAQQAQLAQ (264 aa)) form a coiled coil. Positions 317–330 (AAQQAQAQNNASQQ) are enriched in low complexity. 5 disordered regions span residues 317-344 (AAQQ…SSTP), 494-553 (TPVA…SMSD), 583-617 (GAQS…SRSQ), 712-754 (LAAH…SSFP), and 1323-1349 (EDST…SPPL). Residues 331–344 (RPSVASTPALSSTP) show a composition bias toward polar residues. 2 stretches are compositionally biased toward low complexity: residues 494–523 (TPVA…ATSS) and 539–550 (SSSKAASSGNES). Polar residues predominate over residues 583–601 (GAQSSVDHDSNSGGSTRTS). Polar residues predominate over residues 1324–1338 (DSTSAEPSTSGQSLL). 5 consecutive C2H2-type zinc fingers follow at residues 1447–1469 (YICD…IKSH), 1475–1499 (FNCT…SKTH), 1700–1722 (LKCD…QHTH), 1734–1760 (YQCS…HGVH), and 1790–1814 (FMCV…SKTH). Low complexity predominate over residues 2029–2039 (SITSPIVSSST). Disordered regions lie at residues 2029 to 2059 (SITS…PTHT) and 2085 to 2107 (STDK…PRPI). Residues 2085-2099 (STDKAHASESLSDRL) are compositionally biased toward basic and acidic residues. 2 consecutive C2H2-type zinc fingers follow at residues 2111 to 2134 (TKCQ…HVDH) and 2143 to 2167 (YKCP…VTAH). The disordered stretch occupies residues 2219 to 2242 (HELYAQTQQGAGSSTSNQSPKAAN). The segment covering 2223 to 2242 (AQTQQGAGSSTSNQSPKAAN) has biased composition (polar residues).

In terms of tissue distribution, expressed in the ventral nerve cord (VNC), pharynx, intestine and seam cells (at protein level).

The protein localises to the nucleus. Transcription factor, probably acting as a transcriptional activator and repressor, involved in the TGF-beta-like dbl-1 signaling pathway. Plays a role in regulation of body size, and patterning of male-specific genital sensilla (simple sense organs), known as rays, and mating-associated structures, spicules. Required for the dorsoventral patterning of the postembryonic mesodermal lineage (M lineage), acting by antagonizing the TGF-beta-like dbl-1 signaling pathway, in part by repressing expression of transcription factor unc-130. Involved in egg-laying, perhaps via modulation of cholinergic neurotransmission. Involved in production of reactive oxygen species (ROS), acting downstream of the dbl-1 signaling pathway. Plays a role in the mitochondrial unfolded protein response (mtUPR). May play a role in modulating lifespan and in responses to proteotoxic stress. In terms of biological role, transcription factor, probably acting as a transcriptional activator. Required for patterning of male-specific genital sensilla (simple sense organs), known as rays. Dispensable for regulation of body size. The polypeptide is Transcription factor sma-9 (Caenorhabditis elegans).